Here is a 163-residue protein sequence, read N- to C-terminus: Nucleotide-binding protein LA_3406 (163 aa).

It belongs to the YajQ family.

Nucleotide-binding protein. The sequence is that of Nucleotide-binding protein LA_3406 from Leptospira interrogans serogroup Icterohaemorrhagiae serovar Lai (strain 56601).